The chain runs to 123 residues: Fluoride-specific ion channel FluC (123 aa).

4 helical membrane passes run 7–27 (MAIA…SGLL), 39–59 (MVNS…FWGF), 68–88 (FFGT…YETF), and 101–121 (LNIL…FMLA). The Na(+) site is built by Gly-75 and Ser-78.

It belongs to the fluoride channel Fluc/FEX (TC 1.A.43) family.

Its subcellular location is the cell membrane. It catalyses the reaction fluoride(in) = fluoride(out). Na(+) is not transported, but it plays an essential structural role and its presence is essential for fluoride channel function. Its function is as follows. Fluoride-specific ion channel. Important for reducing fluoride concentration in the cell, thus reducing its toxicity. The chain is Fluoride-specific ion channel FluC from Thermococcus kodakarensis (strain ATCC BAA-918 / JCM 12380 / KOD1) (Pyrococcus kodakaraensis (strain KOD1)).